Consider the following 222-residue polypeptide: Transmembrane reductase CYB561D2 (222 aa).

At 2-17 the chain is on the cytoplasmic side; that stretch reads ALSAETESHIYRALRT. In terms of domain architecture, Cytochrome b561 spans 14-217; the sequence is ALRTASGAAA…NQVSNAYLYR (204 aa). The chain crosses the membrane as a helical span at residues 18–38; sequence ASGAAAHLVALGFTIFVAVLA. At 39 to 46 the chain is on the lumenal side; the sequence is RPGSSLFS. A helical membrane pass occupies residues 47–67; the sequence is WHPVLMSLAFSFLMTEALLVF. Residue His-48 participates in heme b binding. Topologically, residues 68–85 are cytoplasmic; it reads SPESSLLHSLSRKGRARC. The heme b site is built by His-86 and His-120. Residues 86–106 traverse the membrane as a helical segment; the sequence is HWVLQLLALLCALLGLGLVIL. The Lumenal portion of the chain corresponds to 107-122; sequence HKEQLGKAHLVTRHGQ. Residues 123-143 form a helical membrane-spanning segment; sequence AGLLAVLWAGLQCSGGVGLLY. Over 144–162 the chain is Cytoplasmic; the sequence is PKLLPRWPLAKLKLYHATS. A heme b-binding site is contributed by His-159. The chain crosses the membrane as a helical span at residues 163 to 183; sequence GLVGYLLGSASLLLGMCSLWF. The Lumenal segment spans residues 184-186; sequence TAS. A helical membrane pass occupies residues 187–207; that stretch reads VTGAAWYLAVLCPVLTSLVIM. The Cytoplasmic portion of the chain corresponds to 208-222; sequence NQVSNAYLYRKRIQP.

Heme b serves as cofactor.

It is found in the endoplasmic reticulum membrane. The protein localises to the cytoplasmic vesicle membrane. It carries out the reaction monodehydro-L-ascorbate radical(out) + L-ascorbate(in) = monodehydro-L-ascorbate radical(in) + L-ascorbate(out). The enzyme catalyses Fe(3+)(out) + L-ascorbate(in) = monodehydro-L-ascorbate radical(in) + Fe(2+)(out) + H(+). Transmembrane reductase that may use ascorbate as an electron donor in the cytoplasm and transfer electrons across endoplasmic reticulum membranes to reduce monodehydro-L-ascorbate radical and iron cations Fe(3+) in the lumen of that compartment. In Homo sapiens (Human), this protein is Transmembrane reductase CYB561D2.